Reading from the N-terminus, the 80-residue chain is Conotoxin Ca11.3 (80 aa).

The N-terminal stretch at 1–19 (MKLVLAIVVILMLLSLSTG) is a signal peptide. Residues 20–42 (AEMSDNHASRSATALRDRLLSPK) constitute a propeptide that is removed on maturation. Cystine bridges form between cysteine 46–cysteine 60, cysteine 53–cysteine 65, cysteine 59–cysteine 72, and cysteine 64–cysteine 79.

It belongs to the conotoxin I3 superfamily. In terms of tissue distribution, expressed by the venom duct.

It is found in the secreted. This is Conotoxin Ca11.3 from Conus caracteristicus (Characteristic cone).